Here is a 614-residue protein sequence, read N- to C-terminus: Laccase 1 (614 aa).

The N-terminal stretch at 1–21 (MSRFARLLLMVVALFFTNAWA) is a signal peptide. 2 Plastocyanin-like domains span residues 30 to 143 (ITWK…IRPK) and 172 to 360 (YLVV…MRIP). N-linked (GlcNAc...) asparagine glycosylation occurs at Asn-75. Cu cation-binding residues include His-79, His-81, His-123, and His-125. 5 N-linked (GlcNAc...) asparagine glycosylation sites follow: Asn-257, Asn-280, Asn-445, Asn-469, and Asn-485. The region spanning 469-599 (NATRDTENDG…GGMGIAILDG (131 aa)) is the Plastocyanin-like 3 domain. Cu cation is bound by residues His-507, His-510, and His-512. N-linked (GlcNAc...) asparagine glycosylation is present at Asn-527. 4 residues coordinate Cu cation: His-581, Cys-582, His-583, and His-587.

This sequence belongs to the multicopper oxidase family. Requires Cu cation as cofactor.

The protein resides in the cell surface. It functions in the pathway pigment biosynthesis. Laccase; part of the Pks1 gene cluster that mediates the biosynthesis of an anthraquinone derivative pigment that contributes to conidial pigmentation that provides protection from UV radiation, heat and cold stress. The polyketide synthase Pks1 produces 1-acetyl-2,4,6,8-tetrahydroxy-9,10-anthraquinone though condensation of acetyl-CoA with malonyl-CoA. The dehydratase EthD and the laccase Mlac1 further convert the anthraquinone derivative into the final conidial pigment. This chain is Laccase 1, found in Metarhizium majus (strain ARSEF 297).